The primary structure comprises 204 residues: Methylthioribulose-1-phosphate dehydratase (204 aa).

Zn(2+)-binding residues include His94 and His96.

It belongs to the aldolase class II family. MtnB subfamily. The cofactor is Zn(2+).

The catalysed reaction is 5-(methylsulfanyl)-D-ribulose 1-phosphate = 5-methylsulfanyl-2,3-dioxopentyl phosphate + H2O. It functions in the pathway amino-acid biosynthesis; L-methionine biosynthesis via salvage pathway; L-methionine from S-methyl-5-thio-alpha-D-ribose 1-phosphate: step 2/6. In terms of biological role, catalyzes the dehydration of methylthioribulose-1-phosphate (MTRu-1-P) into 2,3-diketo-5-methylthiopentyl-1-phosphate (DK-MTP-1-P). This is Methylthioribulose-1-phosphate dehydratase from Pseudomonas syringae pv. tomato (strain ATCC BAA-871 / DC3000).